The following is a 77-amino-acid chain: Translation initiation factor IF-1, chloroplastic (77 aa).

One can recognise an S1-like domain in the interval 1–71 (MKEQKLIHEG…TRGRIIYRLR (71 aa)).

Belongs to the IF-1 family. In terms of assembly, component of the 30S ribosomal translation pre-initiation complex which assembles on the 30S ribosome in the order IF-2 and IF-3, IF-1 and N-formylmethionyl-tRNA(fMet); mRNA recruitment can occur at any time during PIC assembly.

The protein resides in the plastid. It is found in the chloroplast. Functionally, one of the essential components for the initiation of protein synthesis. Stabilizes the binding of IF-2 and IF-3 on the 30S subunit to which N-formylmethionyl-tRNA(fMet) subsequently binds. Helps modulate mRNA selection, yielding the 30S pre-initiation complex (PIC). Upon addition of the 50S ribosomal subunit IF-1, IF-2 and IF-3 are released leaving the mature 70S translation initiation complex. The chain is Translation initiation factor IF-1, chloroplastic from Calycanthus floridus var. glaucus (Eastern sweetshrub).